We begin with the raw amino-acid sequence, 324 residues long: Acetyl-coenzyme A carboxylase carboxyl transferase subunit beta (324 aa).

Positions 1 to 16 (MTKNNNDLSNSSSNPP) are enriched in low complexity. The tract at residues 1-51 (MTKNNNDLSNSSSNPPSNRPVAGKEAELEIQRETHAAQSGQSESWLSRPIP) is disordered. Residues 22-35 (AGKEAELEIQRETH) show a composition bias toward basic and acidic residues. The segment covering 36–45 (AAQSGQSESW) has biased composition (polar residues). Residues 68 to 324 (PSTECPQCHS…YRLLAKLTHV (257 aa)) form the CoA carboxyltransferase N-terminal domain. Zn(2+) contacts are provided by Cys72, Cys75, Cys91, and Cys94. The segment at 72-94 (CPQCHSMITNTALIFNAYVCPHC) adopts a C4-type zinc-finger fold.

Belongs to the AccD/PCCB family. As to quaternary structure, acetyl-CoA carboxylase is a heterohexamer composed of biotin carboxyl carrier protein (AccB), biotin carboxylase (AccC) and two subunits each of ACCase subunit alpha (AccA) and ACCase subunit beta (AccD). It depends on Zn(2+) as a cofactor.

It localises to the cytoplasm. It catalyses the reaction N(6)-carboxybiotinyl-L-lysyl-[protein] + acetyl-CoA = N(6)-biotinyl-L-lysyl-[protein] + malonyl-CoA. The protein operates within lipid metabolism; malonyl-CoA biosynthesis; malonyl-CoA from acetyl-CoA: step 1/1. Its function is as follows. Component of the acetyl coenzyme A carboxylase (ACC) complex. Biotin carboxylase (BC) catalyzes the carboxylation of biotin on its carrier protein (BCCP) and then the CO(2) group is transferred by the transcarboxylase to acetyl-CoA to form malonyl-CoA. The chain is Acetyl-coenzyme A carboxylase carboxyl transferase subunit beta from Psychrobacter sp. (strain PRwf-1).